A 100-amino-acid polypeptide reads, in one-letter code: NAD(P)H-quinone oxidoreductase subunit 4L, chloroplastic (100 aa).

3 helical membrane-spanning segments follow: residues 1–21, 30–50, and 60–80; these read MLEN…YGLT, LMCL…FSSF, and VFAI…LAII.

It belongs to the complex I subunit 4L family. In terms of assembly, NDH is composed of at least 16 different subunits, 5 of which are encoded in the nucleus.

Its subcellular location is the plastid. It is found in the chloroplast thylakoid membrane. It carries out the reaction a plastoquinone + NADH + (n+1) H(+)(in) = a plastoquinol + NAD(+) + n H(+)(out). It catalyses the reaction a plastoquinone + NADPH + (n+1) H(+)(in) = a plastoquinol + NADP(+) + n H(+)(out). NDH shuttles electrons from NAD(P)H:plastoquinone, via FMN and iron-sulfur (Fe-S) centers, to quinones in the photosynthetic chain and possibly in a chloroplast respiratory chain. The immediate electron acceptor for the enzyme in this species is believed to be plastoquinone. Couples the redox reaction to proton translocation, and thus conserves the redox energy in a proton gradient. This Staurastrum punctulatum (Green alga) protein is NAD(P)H-quinone oxidoreductase subunit 4L, chloroplastic.